Reading from the N-terminus, the 661-residue chain is Threonine--tRNA ligase (661 aa).

The region spanning 1 to 64 is the TGS domain; sequence MSQAISLTFP…TTGRIEIITR (64 aa). The segment at 245–546 is catalytic; sequence DHRRLGREMD…LIENFAGHMP (302 aa). Zn(2+) is bound by residues Cys-341, His-392, and His-523.

It belongs to the class-II aminoacyl-tRNA synthetase family. In terms of assembly, homodimer. Zn(2+) serves as cofactor.

It localises to the cytoplasm. It catalyses the reaction tRNA(Thr) + L-threonine + ATP = L-threonyl-tRNA(Thr) + AMP + diphosphate + H(+). Catalyzes the attachment of threonine to tRNA(Thr) in a two-step reaction: L-threonine is first activated by ATP to form Thr-AMP and then transferred to the acceptor end of tRNA(Thr). Also edits incorrectly charged L-seryl-tRNA(Thr). The polypeptide is Threonine--tRNA ligase (Rhizobium johnstonii (strain DSM 114642 / LMG 32736 / 3841) (Rhizobium leguminosarum bv. viciae)).